The sequence spans 93 residues: Pyrimidine/purine nucleoside phosphorylase (93 aa).

Belongs to the nucleoside phosphorylase PpnP family.

The enzyme catalyses a purine D-ribonucleoside + phosphate = a purine nucleobase + alpha-D-ribose 1-phosphate. It catalyses the reaction adenosine + phosphate = alpha-D-ribose 1-phosphate + adenine. The catalysed reaction is cytidine + phosphate = cytosine + alpha-D-ribose 1-phosphate. It carries out the reaction guanosine + phosphate = alpha-D-ribose 1-phosphate + guanine. The enzyme catalyses inosine + phosphate = alpha-D-ribose 1-phosphate + hypoxanthine. It catalyses the reaction thymidine + phosphate = 2-deoxy-alpha-D-ribose 1-phosphate + thymine. The catalysed reaction is uridine + phosphate = alpha-D-ribose 1-phosphate + uracil. It carries out the reaction xanthosine + phosphate = alpha-D-ribose 1-phosphate + xanthine. Its function is as follows. Catalyzes the phosphorolysis of diverse nucleosides, yielding D-ribose 1-phosphate and the respective free bases. Can use uridine, adenosine, guanosine, cytidine, thymidine, inosine and xanthosine as substrates. Also catalyzes the reverse reactions. In Vibrio vulnificus (strain CMCP6), this protein is Pyrimidine/purine nucleoside phosphorylase.